We begin with the raw amino-acid sequence, 115 residues long: Potassium-transporting ATPase potassium-binding subunit (115 aa).

Helical transmembrane passes span 8–28 (YFLLLIVIAVPLGKYLYVAFF) and 60–80 (SYCTALLIVNAALLGISYGLL).

The protein belongs to the KdpA family. As to quaternary structure, the system is composed of three essential subunits: KdpA, KdpB and KdpC.

The protein resides in the cell membrane. Its function is as follows. Part of the high-affinity ATP-driven potassium transport (or Kdp) system, which catalyzes the hydrolysis of ATP coupled with the electrogenic transport of potassium into the cytoplasm. This subunit binds the extracellular potassium ions and delivers the ions to the membrane domain of KdpB through an intramembrane tunnel. The chain is Potassium-transporting ATPase potassium-binding subunit from Geobacillus stearothermophilus (Bacillus stearothermophilus).